The primary structure comprises 684 residues: Probable pectin methyltransferase QUA2 (684 aa).

The tract at residues 1–35 (MSMPLQRGISGVRVSDSSDDLRDSQMKDKTERARS) is disordered. The Cytoplasmic portion of the chain corresponds to 1-86 (MSMPLQRGIS…RHRLMLLFLK (86 aa)). The segment covering 19-35 (DDLRDSQMKDKTERARS) has biased composition (basic and acidic residues). Residues 87–107 (ISLVLIVVIALAGSFWWTISI) traverse the membrane as a helical; Signal-anchor for type II membrane protein segment. At 108 to 684 (STSSRGHVYH…QKPFTKRQSI (577 aa)) the chain is on the lumenal side. Residues Asn161 and Asn476 are each glycosylated (N-linked (GlcNAc...) asparagine).

Belongs to the methyltransferase superfamily. In terms of tissue distribution, ubiquitous.

It is found in the golgi apparatus membrane. It participates in glycan metabolism; pectin biosynthesis. In terms of biological role, may be involved in the synthesis of homogalacturonan. Required for normal cell adhesion and plant development. The polypeptide is Probable pectin methyltransferase QUA2 (QUA2) (Arabidopsis thaliana (Mouse-ear cress)).